A 264-amino-acid polypeptide reads, in one-letter code: Thymidylate synthase (264 aa).

Arg-21 is a dUMP binding site. His-51 provides a ligand contact to (6R)-5,10-methylene-5,6,7,8-tetrahydrofolate. Residue 126-127 (RR) coordinates dUMP. Cys-146 (nucleophile) is an active-site residue. DUMP is bound by residues 166 to 169 (RSVD), Asn-177, and 207 to 209 (HLY). Asp-169 is a (6R)-5,10-methylene-5,6,7,8-tetrahydrofolate binding site. Ala-263 contacts (6R)-5,10-methylene-5,6,7,8-tetrahydrofolate.

Belongs to the thymidylate synthase family. Bacterial-type ThyA subfamily. As to quaternary structure, homodimer.

It localises to the cytoplasm. It carries out the reaction dUMP + (6R)-5,10-methylene-5,6,7,8-tetrahydrofolate = 7,8-dihydrofolate + dTMP. It participates in pyrimidine metabolism; dTTP biosynthesis. Its function is as follows. Catalyzes the reductive methylation of 2'-deoxyuridine-5'-monophosphate (dUMP) to 2'-deoxythymidine-5'-monophosphate (dTMP) while utilizing 5,10-methylenetetrahydrofolate (mTHF) as the methyl donor and reductant in the reaction, yielding dihydrofolate (DHF) as a by-product. This enzymatic reaction provides an intracellular de novo source of dTMP, an essential precursor for DNA biosynthesis. The protein is Thymidylate synthase of Geobacillus sp. (strain WCH70).